A 136-amino-acid polypeptide reads, in one-letter code: ATP synthase epsilon chain (136 aa).

The protein belongs to the ATPase epsilon chain family. In terms of assembly, F-type ATPases have 2 components, CF(1) - the catalytic core - and CF(0) - the membrane proton channel. CF(1) has five subunits: alpha(3), beta(3), gamma(1), delta(1), epsilon(1). CF(0) has three main subunits: a, b and c.

It is found in the cell inner membrane. Its function is as follows. Produces ATP from ADP in the presence of a proton gradient across the membrane. This is ATP synthase epsilon chain from Agrobacterium fabrum (strain C58 / ATCC 33970) (Agrobacterium tumefaciens (strain C58)).